The primary structure comprises 460 residues: Citrate synthase, peroxisomal (460 aa).

The residue at position 21 (serine 21) is a Phosphoserine. Glycyl lysine isopeptide (Lys-Gly) (interchain with G-Cter in ubiquitin) cross-links involve residues lysine 218 and lysine 239. Active-site residues include histidine 293 and histidine 339. Glycyl lysine isopeptide (Lys-Gly) (interchain with G-Cter in ubiquitin) cross-links involve residues lysine 354 and lysine 385. Residue aspartate 394 is part of the active site. The short motif at 458–460 (SKL) is the C-terminal peroxisome targeting signal (PTS1) element.

It belongs to the citrate synthase family. As to quaternary structure, interacts with F-box protein UCC1. Post-translationally, ubiquitinated by the E3 ubiquitin-protein ligase complex SCF(UCC1), which leads to its degradation by the proteasome. Ubiquitination is prevented by oxaloacetate, suggesting the existence of an oxaloacetate-dependent positive feedback loop that stabilizes CIT2.

Its subcellular location is the cytoplasm. It localises to the peroxisome. The catalysed reaction is oxaloacetate + acetyl-CoA + H2O = citrate + CoA + H(+). The protein operates within carbohydrate metabolism; tricarboxylic acid cycle; isocitrate from oxaloacetate: step 1/2. In terms of biological role, peroxisomal citrate synthase involved in the citrate homeostasis. Catalyzes the condensation of acetyl coenzyme A and oxaloacetate to form citrate. Citrate synthase is the rate-limiting enzyme of the tricarboxylic acid (TCA) cycle. The chain is Citrate synthase, peroxisomal from Saccharomyces cerevisiae (strain ATCC 204508 / S288c) (Baker's yeast).